Consider the following 215-residue polypeptide: MRLILLGAPGAGKGTQAEYLSKRFSIPHISTGDILRENVKNETELGKKAKEYMDKGLLVPDEIVIEIVKDRLSKEDCKNGFLLDGFPRTIAQAEALDKVLEELGQKIDKVLNIEVPDEKILERMSGRRICKNCGASFHVIYRPPQKEGVCDVCGGELYQREDDKEETVKKRLEVYHAQTQPLIDYYKAKGLLVVAYGQEEIADTTKEVLKALGIE.

ATP is bound at residue 10 to 15 (GAGKGT). The NMP stretch occupies residues 30–59 (STGDILRENVKNETELGKKAKEYMDKGLLV). Residues Thr31, Arg36, 57 to 59 (LLV), 85 to 88 (GFPR), and Gln92 each bind AMP. The segment at 126–163 (GRRICKNCGASFHVIYRPPQKEGVCDVCGGELYQREDD) is LID. Arg127 serves as a coordination point for ATP. Zn(2+) is bound by residues Cys130 and Cys133. 136–137 (SF) is a binding site for ATP. Zn(2+) is bound by residues Cys150 and Cys153. AMP-binding residues include Arg160 and Arg171. ATP is bound at residue Gln198.

This sequence belongs to the adenylate kinase family. As to quaternary structure, monomer.

Its subcellular location is the cytoplasm. It catalyses the reaction AMP + ATP = 2 ADP. It participates in purine metabolism; AMP biosynthesis via salvage pathway; AMP from ADP: step 1/1. Its function is as follows. Catalyzes the reversible transfer of the terminal phosphate group between ATP and AMP. Plays an important role in cellular energy homeostasis and in adenine nucleotide metabolism. This Caldicellulosiruptor bescii (strain ATCC BAA-1888 / DSM 6725 / KCTC 15123 / Z-1320) (Anaerocellum thermophilum) protein is Adenylate kinase.